Here is a 329-residue protein sequence, read N- to C-terminus: DNA-directed RNA polymerase subunit alpha (329 aa).

Residues 1–234 (MQGSVTEFLK…EQLDAFVELR (234 aa)) are alpha N-terminal domain (alpha-NTD). The tract at residues 248–329 (FDPILLRPVD…WPPASLADDL (82 aa)) is alpha C-terminal domain (alpha-CTD).

It belongs to the RNA polymerase alpha chain family. As to quaternary structure, homodimer. The RNAP catalytic core consists of 2 alpha, 1 beta, 1 beta' and 1 omega subunit. When a sigma factor is associated with the core the holoenzyme is formed, which can initiate transcription.

It catalyses the reaction RNA(n) + a ribonucleoside 5'-triphosphate = RNA(n+1) + diphosphate. Functionally, DNA-dependent RNA polymerase catalyzes the transcription of DNA into RNA using the four ribonucleoside triphosphates as substrates. The polypeptide is DNA-directed RNA polymerase subunit alpha (Shewanella amazonensis (strain ATCC BAA-1098 / SB2B)).